The following is an 866-amino-acid chain: Protein mono-ADP-ribosyltransferase PARP9 (866 aa).

Ser-42 carries the phosphoserine modification. 2 consecutive Macro domains span residues 109-298 and 313-492; these read QRVF…ESIL and ASTM…TKRS. One can recognise a PARP catalytic domain in the interval 635 to 853; that stretch reads TNQQEKLDKM…YSSGPGMVSS (219 aa).

The protein belongs to the ARTD/PARP family. Forms a stable complex with E3 ligase DTX3L; the interaction is required for PARP9 mediated ADP-ribosylation of ubiquitin. Interacts (via PARP catalytic domain) with DTX3L (via N-terminus). Forms a complex with STAT1 and DTX3L independently of IFNB1 or IFNG-mediated STAT1 'Tyr-701' phosphorylation. Forms a complex with STAT1, DTX3L and histone H2B H2BC9/H2BJ; the interaction is likely to induce H2BC9/H2BJ ubiquitination. Interacts (via N-terminus) with STAT1. Interacts with PARP14 in IFNG-stimulated macrophages; the interaction prevents PARP14-mediated STAT1 and STAT6 ADP-riboslylation. Interacts with PARP1 (when poly-ADP-ribosylated). Post-translationally, ADP-ribosylated by PARP14. As to expression, highly expressed in the thymus and intestine. Expressed in macrophages.

Its subcellular location is the cytoplasm. The protein localises to the cytosol. The protein resides in the nucleus. The enzyme catalyses [protein]-C-terminal glycine + NAD(+) = [protein]-C-terminal O-(ADP-D-ribosyl)-glycine + nicotinamide. Binding to poly(ADP-ribose) does not affect its activity. ADP-ribosyltransferase which, in association with E3 ligase DTX3L, plays a role in DNA damage repair and in immune responses including interferon-mediated antiviral defenses. Within the complex, enhances DTX3L E3 ligase activity which is further enhanced by PARP9 binding to poly(ADP-ribose). In addition, positively regulates DTXL3 protein levels. In association with DTX3L and in presence of E1 and E2 enzymes, mediates NAD(+)-dependent mono-ADP-ribosylation of ubiquitin which prevents ubiquitin conjugation to substrates such as histones. During DNA repair, PARP1 recruits PARP9/BAL1-DTX3L complex to DNA damage sites via PARP9 binding to ribosylated PARP1. Subsequent PARP1-dependent PARP9/BAL1-DTX3L-mediated ubiquitination promotes the rapid and specific recruitment of 53BP1/TP53BP1, UIMC1/RAP80, and BRCA1 to DNA damage sites. In response to DNA damage, PARP9-DTX3L complex is required for efficient non-homologous end joining (NHEJ) but the complex function is restrained by PARP9 activity. Dispensable for B-cell receptor (BCR) assembly through V(D)J recombination and class switch recombination (CSR). In macrophages, positively regulates pro-inflammatory cytokines production in response to IFNG stimulation by suppressing PARP14-mediated STAT1 ADP-ribosylation and thus promoting STAT1 phosphorylation. Also suppresses PARP14-mediated STAT6 ADP-ribosylation. In Mus musculus (Mouse), this protein is Protein mono-ADP-ribosyltransferase PARP9 (Parp9).